The following is a 272-amino-acid chain: Deaminated glutathione amidase (272 aa).

In terms of domain architecture, CN hydrolase spans M1–P253. Residue E43 is the Proton acceptor of the active site. The active-site Proton donor is the K115. C158 (nucleophile) is an active-site residue.

Belongs to the carbon-nitrogen hydrolase superfamily. NIT1/NIT2 family.

It catalyses the reaction N-(4-oxoglutaryl)-L-cysteinylglycine + H2O = L-cysteinylglycine + 2-oxoglutarate. Hydrolyzes deaminated glutathione (dGSH, 2-oxoglutaramate) to alpha-ketoglutarate (alpha-KG) and cysteinylglycine (specific activity 7.77 umol/min/mg), hydrolyzes alpha-ketoglutaramate (a-KGM, specific activity 2.13 umol/min/mg), has no activity on glutathione or L-glutamine. May function as a metabolite repair enzyme. This chain is Deaminated glutathione amidase, found in Synechocystis sp. (strain PCC 6803 / GT-S).